The sequence spans 106 residues: Urease subunit beta (106 aa).

It belongs to the urease beta subunit family. In terms of assembly, heterotrimer of UreA (gamma), UreB (beta) and UreC (alpha) subunits. Three heterotrimers associate to form the active enzyme.

The protein resides in the cytoplasm. It carries out the reaction urea + 2 H2O + H(+) = hydrogencarbonate + 2 NH4(+). Its pathway is nitrogen metabolism; urea degradation; CO(2) and NH(3) from urea (urease route): step 1/1. The chain is Urease subunit beta from Citrobacter koseri (strain ATCC BAA-895 / CDC 4225-83 / SGSC4696).